The primary structure comprises 642 residues: Threonine--tRNA ligase (642 aa).

Residues 1–61 form the TGS domain; that stretch reads MPVITLPDGS…ESDAQLAIIT (61 aa). The interval 243 to 534 is catalytic; sequence DHRKIGKQLD…LTEEYAGFFP (292 aa). Cys-334, His-385, and His-511 together coordinate Zn(2+).

Belongs to the class-II aminoacyl-tRNA synthetase family. In terms of assembly, homodimer. Zn(2+) is required as a cofactor.

Its subcellular location is the cytoplasm. It carries out the reaction tRNA(Thr) + L-threonine + ATP = L-threonyl-tRNA(Thr) + AMP + diphosphate + H(+). Catalyzes the attachment of threonine to tRNA(Thr) in a two-step reaction: L-threonine is first activated by ATP to form Thr-AMP and then transferred to the acceptor end of tRNA(Thr). Also edits incorrectly charged L-seryl-tRNA(Thr). The polypeptide is Threonine--tRNA ligase (Yersinia pseudotuberculosis serotype O:1b (strain IP 31758)).